Reading from the N-terminus, the 156-residue chain is Ribosome-binding factor A (156 aa).

The segment at 129–156 (AGEAQPYRVEEEPGDSEDETPPSSQDQR) is disordered.

This sequence belongs to the RbfA family. Monomer. Binds 30S ribosomal subunits, but not 50S ribosomal subunits or 70S ribosomes.

The protein resides in the cytoplasm. Its function is as follows. One of several proteins that assist in the late maturation steps of the functional core of the 30S ribosomal subunit. Associates with free 30S ribosomal subunits (but not with 30S subunits that are part of 70S ribosomes or polysomes). Required for efficient processing of 16S rRNA. May interact with the 5'-terminal helix region of 16S rRNA. The protein is Ribosome-binding factor A of Salinispora arenicola (strain CNS-205).